We begin with the raw amino-acid sequence, 626 residues long: Procollagen galactosyltransferase 2 (626 aa).

Residues 1–27 (MAARPAATLAWSLLLLSSALLREGCRA) form the signal peptide. N-linked (GlcNAc...) asparagine glycans are attached at residues Asn97, Asn185, Asn382, and Asn580. The interval 604–626 (NAKNTEALPPPTSLDTVPSRDEL) is disordered. Positions 623–626 (RDEL) match the Prevents secretion from ER motif.

The protein belongs to the glycosyltransferase 25 family. Expressed in brain and skeletal muscle.

The protein resides in the endoplasmic reticulum lumen. The catalysed reaction is (5R)-5-hydroxy-L-lysyl-[collagen] + UDP-alpha-D-galactose = (5R)-5-O-(beta-D-galactosyl)-5-hydroxy-L-lysyl-[collagen] + UDP + H(+). Beta-galactosyltransferase that transfers beta-galactose to hydroxylysine residues of collagen. In Homo sapiens (Human), this protein is Procollagen galactosyltransferase 2 (COLGALT2).